We begin with the raw amino-acid sequence, 499 residues long: GTPase Der (499 aa).

EngA-type G domains follow at residues 3–166 and 213–386; these read PVVA…LETL and IKFA…QSAT. GTP-binding positions include 9–16, 56–60, 118–121, 219–226, 266–270, and 331–334; these read GRPNVGKS, DTGGI, NKTD, DTAGV, and NKWD. The KH-like domain maps to 387-471; sequence RRTSTAMLTR…PVRVEFQESA (85 aa).

Belongs to the TRAFAC class TrmE-Era-EngA-EngB-Septin-like GTPase superfamily. EngA (Der) GTPase family. As to quaternary structure, associates with the 50S ribosomal subunit.

In terms of biological role, GTPase that plays an essential role in the late steps of ribosome biogenesis. The protein is GTPase Der of Aeromonas hydrophila subsp. hydrophila (strain ATCC 7966 / DSM 30187 / BCRC 13018 / CCUG 14551 / JCM 1027 / KCTC 2358 / NCIMB 9240 / NCTC 8049).